A 223-amino-acid chain; its full sequence is 2-C-methyl-D-erythritol 4-phosphate cytidylyltransferase (223 aa).

Belongs to the IspD/TarI cytidylyltransferase family. IspD subfamily.

It carries out the reaction 2-C-methyl-D-erythritol 4-phosphate + CTP + H(+) = 4-CDP-2-C-methyl-D-erythritol + diphosphate. The protein operates within isoprenoid biosynthesis; isopentenyl diphosphate biosynthesis via DXP pathway; isopentenyl diphosphate from 1-deoxy-D-xylulose 5-phosphate: step 2/6. In terms of biological role, catalyzes the formation of 4-diphosphocytidyl-2-C-methyl-D-erythritol from CTP and 2-C-methyl-D-erythritol 4-phosphate (MEP). This is 2-C-methyl-D-erythritol 4-phosphate cytidylyltransferase from Synechococcus sp. (strain WH7803).